Consider the following 842-residue polypeptide: Oxysterol-binding protein-related protein 7 (842 aa).

Residues 1 to 28 (MDFQERDPPFLPESAQSSKPSSAQQASE) are disordered. Positions 14–27 (SAQSSKPSSAQQAS) are enriched in low complexity. The 96-residue stretch at 47 to 142 (PERQEGHLLK…WVAQLRAHRL (96 aa)) folds into the PH domain. At Thr-171 the chain carries Phosphothreonine. Residues Ser-217, Ser-226, Ser-256, and Ser-272 each carry the phosphoserine modification. The disordered stretch occupies residues 330–369 (DMHQGSELSRMGVSEASTGQRRLHSLSTSSDTTADSFSSL). Residues 354–369 (SLSTSSDTTADSFSSL) show a composition bias toward low complexity.

It belongs to the OSBP family. In terms of tissue distribution, expressed in epithelium of small and large intestines (at protein level). Expressed in stomach, duodenum, jejunum, ascending colon, spleen, thymus, lymph node, trachea and leukocytes.

The protein resides in the cytoplasm. The protein localises to the cytosol. It localises to the endoplasmic reticulum membrane. It is found in the cell membrane. The chain is Oxysterol-binding protein-related protein 7 (OSBPL7) from Homo sapiens (Human).